The sequence spans 276 residues: Transmembrane protein 81 (276 aa).

The first 24 residues, 1–24, serve as a signal peptide directing secretion; it reads MKTSATSFIPGSLVLAFCLPVVAT. The Extracellular segment spans residues 25–225; the sequence is SPKTLAIPEK…QHPPWKKKVA (201 aa). N45 is a glycosylation site (N-linked (GlcNAc...) asparagine). The Ig-like domain maps to 83–176; that stretch reads TNWLCGMLHF…NLRLVKRLYF (94 aa). C104 and C160 form a disulfide bridge. The N-linked (GlcNAc...) asparagine glycan is linked to N211. A helical membrane pass occupies residues 226–246; that stretch reads IAVGIGVAGGVTGGVLVSIVL. The Cytoplasmic portion of the chain corresponds to 247-276; that stretch reads CGRLSVIHSSASLETLQALLPKGGMLRKPD.

Forms a complex with IZUMO1 and SPACA6 on spermatocyte cell membrane required for fertilization.

The protein localises to the cell membrane. In terms of biological role, essential fertilization factor required for male fertility. Part of a conserved trimeric sperm complex with the essential fertilization factors IZUMO1 and SPACA6 which bridges sperm and oocyte membranes during fertilization by binding to IZUMO1R/JUNO on the oocyte. In Bos taurus (Bovine), this protein is Transmembrane protein 81 (TMEM81).